The chain runs to 789 residues: MNEKSIRVLEYGKMIDRLEERCLSAMAKEKARELRPIQSFGEITQLQSETSEAQSILIQRGNIPLGGIHDIKQYLRKTEIGSYLDPKELLLVKDTLRTARNLKSFFKEGDDQTKHPIVSGLIQGLQSFRAIEDRIEICIVSDTEISDHASSTLKNIRRQISSKNDAVRNKLNGIINSSTTQKYLQDAIITMRQDRYVVPVKQEHRGNVPGLIHDQSSSGATLFVEPMAVVQLNNELRELKIKEHIEIERILMEIAEMIAQYATEMRNNQIILTAIDFVFAKGKLSLEMKGVEPLLNVEGNVHIKNGRHPLLNADEVVPTNLWIGETFQTLVITGPNTGGKTVTLKTLGLLSMMAQSGLHVPADYGTRLAIFDQIFADIGDEQSIEQSLSTFSSHMTNIVNIVEEVTSNSLVLFDELGAGTDPTEGAALGMAILNHLREMNVTTVATTHYSELKQYALTNEGVENASVEFDVATLSPTYRLLIGVPGKSNAFEISKKLGLPDGLVQRAKRFLSQDTIHFEDLLQNIEKNRRESEIERQEAKRIRLEAEKFAEGYEDRKQRLEAQRDQILRDAKKEAYRLVKEAKMDSEHIIKGLREMKFELEAKEMNKKMEDAKNQLTGKMNDLSDHHQQILNKKNKKPPKNLKPGDAVRILSLNQVGHVLNEVDPKGEVQVQAGIMKVNMHISNLERVSPEKDIQQSGTGKIMKSKTGDTKSEVDVRGKNLEEAMLEIDKYLDDSYIVGLTQVTIIHGVGTGVLKAGIKQMLKKNKHVRTHREGVYGEGGMGVTIVELK.

Residue G334–T341 participates in ATP binding. The tract at residues P690 to V714 is disordered. One can recognise a Smr domain in the interval V714–K789.

Belongs to the DNA mismatch repair MutS family. MutS2 subfamily. As to quaternary structure, homodimer. Binds to stalled ribosomes, contacting rRNA.

In terms of biological role, endonuclease that is involved in the suppression of homologous recombination and thus may have a key role in the control of bacterial genetic diversity. Its function is as follows. Acts as a ribosome collision sensor, splitting the ribosome into its 2 subunits. Detects stalled/collided 70S ribosomes which it binds and splits by an ATP-hydrolysis driven conformational change. Acts upstream of the ribosome quality control system (RQC), a ribosome-associated complex that mediates the extraction of incompletely synthesized nascent chains from stalled ribosomes and their subsequent degradation. Probably generates substrates for RQC. The polypeptide is Endonuclease MutS2 (Alkaliphilus metalliredigens (strain QYMF)).